The chain runs to 165 residues: HTH-type transcriptional regulator MmpR5 (165 aa).

One can recognise an HTH marR-type domain in the interval 1–151 (MSVNDGVDQM…LLAYMENVVS (151 aa)). The H-T-H motif DNA-binding region spans 53–76 (SEELATALAASSGGISTNARMLIQ).

Homodimer.

Controls the expression level of the Mmps2-MmpL2, MmpS4-MmpL4, and MmpS5-MmpL5 transport systems. Also controls its own expression. Acts by binding directly to the promoter regions. In Mycobacterium tuberculosis (strain ATCC 25618 / H37Rv), this protein is HTH-type transcriptional regulator MmpR5.